The following is a 406-amino-acid chain: Nicotinate phosphoribosyltransferase (406 aa).

The residue at position 226 (His226) is a Phosphohistidine; by autocatalysis.

Belongs to the NAPRTase family. Post-translationally, transiently phosphorylated on a His residue during the reaction cycle. Phosphorylation strongly increases the affinity for substrates and increases the rate of nicotinate D-ribonucleotide production. Dephosphorylation regenerates the low-affinity form of the enzyme, leading to product release.

The catalysed reaction is nicotinate + 5-phospho-alpha-D-ribose 1-diphosphate + ATP + H2O = nicotinate beta-D-ribonucleotide + ADP + phosphate + diphosphate. It functions in the pathway cofactor biosynthesis; NAD(+) biosynthesis; nicotinate D-ribonucleotide from nicotinate: step 1/1. Catalyzes the synthesis of beta-nicotinate D-ribonucleotide from nicotinate and 5-phospho-D-ribose 1-phosphate at the expense of ATP. The sequence is that of Nicotinate phosphoribosyltransferase from Verminephrobacter eiseniae (strain EF01-2).